A 300-amino-acid chain; its full sequence is NAD kinase (300 aa).

Asp-75 (proton acceptor) is an active-site residue. Residues 75–76, 149–150, Arg-177, Asp-179, 190–195, Ala-214, and Gln-248 contribute to the NAD(+) site; these read DG, ND, and TAYALS.

It belongs to the NAD kinase family. Requires a divalent metal cation as cofactor.

It is found in the cytoplasm. The catalysed reaction is NAD(+) + ATP = ADP + NADP(+) + H(+). Its function is as follows. Involved in the regulation of the intracellular balance of NAD and NADP, and is a key enzyme in the biosynthesis of NADP. Catalyzes specifically the phosphorylation on 2'-hydroxyl of the adenosine moiety of NAD to yield NADP. The sequence is that of NAD kinase from Burkholderia orbicola (strain MC0-3).